The chain runs to 107 residues: uncharacterized protein (107 aa).

The Glutaredoxin domain occupies 6–107; that stretch reads KARIDQLVTA…QEMLEVALAS (102 aa). Residue Lys-23 participates in glutathione binding. Cys-31 contacts [2Fe-2S] cluster. Glutathione contacts are provided by residues Arg-60 and 85–86; that span reads SD.

Belongs to the glutaredoxin family. Monothiol subfamily.

This is an uncharacterized protein from Synechocystis sp. (strain ATCC 27184 / PCC 6803 / Kazusa).